Here is a 231-residue protein sequence, read N- to C-terminus: NADH-ubiquinone oxidoreductase chain 4 (231 aa).

The next 6 membrane-spanning stretches (helical) occupy residues 1-21, 34-54, 63-85, 89-111, 118-138, and 156-176; these read PIAG…YGII, LFLP…LTCL, IAYS…TPWG, AMAL…NTTY, ILIL…WWLL, and LLIM…LGLS.

This sequence belongs to the complex I subunit 4 family.

It is found in the mitochondrion membrane. The catalysed reaction is a ubiquinone + NADH + 5 H(+)(in) = a ubiquinol + NAD(+) + 4 H(+)(out). Core subunit of the mitochondrial membrane respiratory chain NADH dehydrogenase (Complex I) that is believed to belong to the minimal assembly required for catalysis. Complex I functions in the transfer of electrons from NADH to the respiratory chain. The immediate electron acceptor for the enzyme is believed to be ubiquinone. In Ovophis okinavensis (Ryukyu Island pit viper), this protein is NADH-ubiquinone oxidoreductase chain 4 (MT-ND4).